The sequence spans 182 residues: Putative manganese efflux pump MntP (182 aa).

Helical transmembrane passes span 6–26, 37–57, 71–91, 101–121, 131–151, and 162–182; these read LIPL…VSLG, ILYI…IGMV, HFAG…STIL, IGIS…SVGL, IITI…GLLI, and YGEI…LFPI.

This sequence belongs to the MntP (TC 9.B.29) family.

The protein localises to the cell membrane. Probably functions as a manganese efflux pump. This chain is Putative manganese efflux pump MntP, found in Bacillus cereus (strain B4264).